We begin with the raw amino-acid sequence, 679 residues long: Glutamine-dependent NAD(+) synthetase (679 aa).

A CN hydrolase domain is found at 12–276; sequence VRVAACTHHT…VRRSVADVDT (265 aa). Residue Glu-52 is the Proton acceptor; for glutaminase activity of the active site. Residue Lys-121 is the For glutaminase activity of the active site. Tyr-127 serves as a coordination point for L-glutamine. The active-site Nucleophile; for glutaminase activity is the Cys-176. Positions 203 and 209 each coordinate L-glutamine. Residues 337 to 679 are ligase; it reads QQDCYEAYNI…DQIDREVPKG (343 aa). Position 366–373 (366–373) interacts with ATP; the sequence is GVSGGLDS. A deamido-NAD(+)-binding site is contributed by Asn-456. Thr-480 is an ATP binding site. Deamido-NAD(+)-binding positions include Glu-485, 490–493, and Lys-635; that span reads WSTY. The tract at residues 639-658 is disordered; the sequence is LPNGPKVSHGGALSPRGDWR.

In the C-terminal section; belongs to the NAD synthetase family.

The enzyme catalyses deamido-NAD(+) + L-glutamine + ATP + H2O = L-glutamate + AMP + diphosphate + NAD(+) + H(+). It participates in cofactor biosynthesis; NAD(+) biosynthesis; NAD(+) from deamido-NAD(+) (L-Gln route): step 1/1. In terms of biological role, catalyzes the ATP-dependent amidation of deamido-NAD to form NAD. Uses L-glutamine as a nitrogen source. In Mycobacterium bovis (strain ATCC BAA-935 / AF2122/97), this protein is Glutamine-dependent NAD(+) synthetase.